A 113-amino-acid polypeptide reads, in one-letter code: Putative pterin-4-alpha-carbinolamine dehydratase (113 aa).

This sequence belongs to the pterin-4-alpha-carbinolamine dehydratase family.

The catalysed reaction is (4aS,6R)-4a-hydroxy-L-erythro-5,6,7,8-tetrahydrobiopterin = (6R)-L-erythro-6,7-dihydrobiopterin + H2O. In Chlorobium limicola (strain DSM 245 / NBRC 103803 / 6330), this protein is Putative pterin-4-alpha-carbinolamine dehydratase.